Consider the following 434-residue polypeptide: Isocitrate lyase (434 aa).

Position 91–93 (91–93) interacts with substrate; the sequence is SGW. Residue Asp-157 coordinates Mg(2+). The Proton acceptor role is filled by Cys-195. Residues 196–197, Arg-232, 317–321, and Thr-351 contribute to the substrate site; these read GH and NCSPS.

This sequence belongs to the isocitrate lyase/PEP mutase superfamily. Isocitrate lyase family. As to quaternary structure, homotetramer. The cofactor is Mg(2+).

It carries out the reaction D-threo-isocitrate = glyoxylate + succinate. The protein operates within carbohydrate metabolism; glyoxylate cycle; (S)-malate from isocitrate: step 1/2. In terms of biological role, involved in the metabolic adaptation in response to environmental changes. Catalyzes the reversible formation of succinate and glyoxylate from isocitrate, a key step of the glyoxylate cycle, which operates as an anaplerotic route for replenishing the tricarboxylic acid cycle during growth on fatty acid substrates. The sequence is that of Isocitrate lyase (aceA) from Escherichia coli O6:H1 (strain CFT073 / ATCC 700928 / UPEC).